Reading from the N-terminus, the 251-residue chain is Protein TK1472 (251 aa).

Belongs to the CinA family.

This chain is Protein TK1472, found in Thermococcus kodakarensis (strain ATCC BAA-918 / JCM 12380 / KOD1) (Pyrococcus kodakaraensis (strain KOD1)).